The sequence spans 561 residues: Carbohydrate sulfotransferase 15 (561 aa).

Over Met-1–Cys-80 the chain is Cytoplasmic. Residues Ser-81–Ala-101 traverse the membrane as a helical; Signal-anchor for type II membrane protein segment. The Lumenal portion of the chain corresponds to His-102–Thr-561. Residue Lys-263–Thr-267 participates in 3'-phosphoadenylyl sulfate binding. The N-linked (GlcNAc...) asparagine glycan is linked to Asn-364. The 3'-phosphoadenylyl sulfate site is built by Arg-392 and Ser-400.

The protein belongs to the sulfotransferase 1 family. In terms of assembly, homodimer; disulfide-linked (Potential). The relevance of homodimerization is however unsure. May interact with phosphorylated proteins in resting B-cells, including HCK. Requires a divalent metal cation as cofactor. The cofactor is glutathione. In terms of processing, glycosylated. Expressed in B-cell-enriched tissues but not in fetal or adult thymus. Expressed in fetal and adult spleen, lymph node, tonsil, bone marrow and peripheral leukocytes. Not expressed in T-cells. In pro-B, pre-B, and mature B-cell lines, it colocalizes with RAG1.

The protein resides in the golgi apparatus membrane. The catalysed reaction is dermatan 4'-sulfate + n 3'-phosphoadenylyl sulfate = dermatan 4',6'-bissulfate + n adenosine 3',5'-bisphosphate + n H(+). It carries out the reaction chondroitin 4'-sulfate + n 3'-phosphoadenylyl sulfate = chondroitin 4',6'-bissulfate + n adenosine 3',5'-bisphosphate + n H(+). Inhibited by phenyl beta-GalNAc(4,6-SO(4)). Functionally, sulfotransferase that transfers sulfate from 3'-phosphoadenosine 5'-phosphosulfate (PAPS) to the C-6 hydroxyl group of the GalNAc 4-sulfate residue of chondroitin sulfate A and forms chondroitin sulfate E containing GlcA-GalNAc(4,6-SO(4)) repeating units. It also transfers sulfate to a unique non-reducing terminal sequence, GalNAc(4SO4)-GlcA(2SO4)-GalNAc(6SO4), to yield a highly sulfated structure similar to the structure found in thrombomodulin chondroitin sulfate. May also act as a B-cell receptor involved in BCR ligation-mediated early activation that mediate regulatory signals key to B-cell development and/or regulation of B-cell-specific RAG expression; however such results are unclear in vivo. This is Carbohydrate sulfotransferase 15 (CHST15) from Homo sapiens (Human).